Consider the following 368-residue polypeptide: Protein trichome birefringence-like 43 (368 aa).

Residues 9 to 25 (GVVSVMVLMILVLLKQI) traverse the membrane as a helical; Signal-anchor for type II membrane protein segment. The short motif at 117 to 119 (GDS) is the GDS motif element. Residues 344–358 (DCSHWCLSGVPDSWN) carry the DCXHWCLPGXXDXWN motif motif.

The protein belongs to the PC-esterase family. TBL subfamily.

Its subcellular location is the membrane. Its function is as follows. May act as a bridging protein that binds pectin and other cell wall polysaccharides. Probably involved in maintaining esterification of pectins. May be involved in the specific O-acetylation of cell wall polymers. This is Protein trichome birefringence-like 43 (TBL43) from Arabidopsis thaliana (Mouse-ear cress).